Here is a 2133-residue protein sequence, read N- to C-terminus: Coagulation factor VIII (2133 aa).

A signal peptide spans 1 to 19; the sequence is MQLELSTCVFLCLLPLGFS. Plastocyanin-like domains are found at residues 20–199, 207–357, 399–573, and 583–730; these read AIRR…LLVC, ERTQ…QLRR, KTWV…LLIC, and NQMM…VYSC. F5/8 type A domains follow at residues 20-357 and 399-730; these read AIRR…QLRR and KTWV…VYSC. Residues Cys-173 and Cys-199 are joined by a disulfide bond. N-linked (GlcNAc...) asparagine glycans are attached at residues Asn-233 and Asn-259. Residues Cys-547 and Cys-573 are joined by a disulfide bond. Asn-601 is a glycosylation site (N-linked (GlcNAc...) asparagine). 3 positions are modified to sulfotyrosine: Tyr-737, Tyr-738, and Tyr-742. Disordered regions lie at residues 760–790 and 804–914; these read SFAQNSRPPSASQKQFQTITSPEDDVELDPQ and PSGD…PHPQ. Positions 760–1599 are b; the sequence is SFAQNSRPPS…LISYPDDQEQ (840 aa). The span at 761–780 shows a compositional bias: polar residues; the sequence is FAQNSRPPSASQKQFQTITS. Basic and acidic residues-rich tracts occupy residues 853–862 and 868–878; these read LRPELHHSAE and EPEKELKKLDS. Positions 879–888 are enriched in low complexity; sequence KMSSSSDLLK. A compositionally biased stretch (polar residues) spans 889–900; it reads TSPTIPSDTLSA. Asn-929, Asn-985, and Asn-1025 each carry an N-linked (GlcNAc...) asparagine glycan. Residues 1042–1078 form a disordered region; sequence LGKNPLSSERGPSPELLTSSGSGKSVKGQSSGQGRIR. A compositionally biased stretch (low complexity) spans 1060 to 1075; the sequence is SSGSGKSVKGQSSGQG. Asn-1111 is a glycosylation site (N-linked (GlcNAc...) asparagine). The tract at residues 1160 to 1179 is disordered; sequence PSVEGFDGGSHAPVPQDSRS. Asn-1181, Asn-1208, Asn-1245, Asn-1265, and Asn-1335 each carry an N-linked (GlcNAc...) asparagine glycan. Residues 1200-1221 form a disordered region; it reads EAPLEAPGNRTGPGPRSAVPRR. 2 disordered regions span residues 1358 to 1391 and 1406 to 1441; these read LNKVNRPGRTPSKLLGPPMPKEWESLEKSPKSTA and ESNHSIAAKNEGQAETQREAAWTKQGGPGRLCAPKP. The segment covering 1378 to 1387 has biased composition (basic and acidic residues); sequence KEWESLEKSP. N-linked (GlcNAc...) asparagine glycosylation is found at Asn-1408 and Asn-1611. Plastocyanin-like domains are found at residues 1495 to 1659 and 1669 to 1822; these read RTRH…LLIC and GRQV…SKEC. One can recognise an F5/8 type A 3 domain in the interval 1495 to 1822; sequence RTRHYFIAAV…TTFLVYSKEC (328 aa). Disulfide bonds link Cys-1633–Cys-1659, Cys-1822–Cys-1970, and Cys-1975–Cys-2127. 2 F5/8 type C domains span residues 1822 to 1970 and 1975 to 2127; these read CQAP…LMGC and CSMP…VLGC. Residue Asn-1919 is glycosylated (N-linked (GlcNAc...) asparagine).

This sequence belongs to the multicopper oxidase family. In terms of assembly, interacts with vWF. vWF binding is essential for the stabilization of F8 in circulation. Proteolytically cleaved by cathepsin CTSG to produce a partially activated form.

It is found in the secreted. Its subcellular location is the extracellular space. Functionally, factor VIII, along with calcium and phospholipid, acts as a cofactor for factor IXa when it converts factor X to the activated form, factor Xa. The sequence is that of Coagulation factor VIII (F8) from Sus scrofa (Pig).